A 147-amino-acid polypeptide reads, in one-letter code: Protein SprT-like (147 aa).

A SprT-like domain is found at 5–142; the sequence is DYVNEVSLED…SFCRGHLKEI (138 aa). His-64 contacts Zn(2+). The active site involves Glu-65. Position 68 (His-68) interacts with Zn(2+).

It belongs to the SprT family. Zn(2+) is required as a cofactor.

The protein resides in the cytoplasm. The polypeptide is Protein SprT-like (Streptococcus uberis (strain ATCC BAA-854 / 0140J)).